Consider the following 874-residue polypeptide: Cellulose synthase catalytic subunit [UDP-forming] (874 aa).

Transmembrane regions (helical) follow at residues 30-50 (SPFS…VFPL), 151-171 (ILGV…TQPF), 173-193 (PLSQ…VRRM), and 230-250 (LVCG…LVLG). The segment at 271–364 (QWPTVDIFVP…FVAIFDCDHV (94 aa)) is catalytic subdomain A. Residue D313 is part of the active site. Substrate-binding residues include D360 and D362. Residues 441–501 (KPLDEIGGIA…GQRIRWARGM (61 aa)) form a catalytic subdomain B region. The active site involves D457. A run of 5 helical transmembrane segments spans residues 525-545 (LNAM…TAPL), 547-567 (FLLL…LFVI), 592-612 (IYET…LINP), 634-654 (VISR…AAGV), and 668-688 (VIVS…AVAV). The 97-residue stretch at 694 to 790 (QVRRAHRVEI…QHIDFVQCTF (97 aa)) folds into the PilZ domain. The chain crosses the membrane as a helical span at residues 833 to 853 (SVKVIFRSLTALIAWIVSFIP).

The protein belongs to the glycosyltransferase 2 family. It depends on Mg(2+) as a cofactor.

The protein resides in the cell inner membrane. The enzyme catalyses [(1-&gt;4)-beta-D-glucosyl](n) + UDP-alpha-D-glucose = [(1-&gt;4)-beta-D-glucosyl](n+1) + UDP + H(+). Its pathway is glycan metabolism; bacterial cellulose biosynthesis. With respect to regulation, activated by bis-(3'-5') cyclic diguanylic acid (c-di-GMP). Its function is as follows. Catalytic subunit of cellulose synthase. It polymerizes uridine 5'-diphosphate glucose to cellulose, which is produced as an extracellular component for mechanical and chemical protection at the onset of the stationary phase, when the cells exhibit multicellular behavior (rdar morphotype). Coexpression of cellulose and thin aggregative fimbriae leads to a hydrophobic network with tightly packed cells embedded in a highly inert matrix. In Salmonella typhi, this protein is Cellulose synthase catalytic subunit [UDP-forming] (bcsA).